A 391-amino-acid chain; its full sequence is MKNYKMNFIELQVTLSFCVVFLLRMLGIFSVLPILSKYGLYLNGGNKFLIGLAVGIYGATQIVFQIPFGILSDRFGRKQIIIFGLFIFFIGSLIVVSTNSIFGLIIGRAIQGSGAISGVSMALLSDLIRKENRIKSISIIGVSFAVSFLISVVSAPIIAENFGFFSIFWISAVFSIFSILIVFFLIPSSQNEILKNYKKNIYQKKIKFIFNKIFFRFYLGVFLLHFLLTMNFLIIPYEFELSGLALHYHWIVYFATIVFSFFFLFLIVFYFKFHFFLKNIIEICIFFIFLSLLLFLLSQHNLICLTFALQIFFIAFNILEIFFPSHLSQEISINYYKGSIMSIYSTSQFLGIACGGVLNGLLCTFFNTNHIFLFEIFITLIWFIFSFFCKK.

11 helical membrane-spanning segments follow: residues 15-35 (LSFCVVFLLRMLGIFSVLPIL), 48-68 (FLIGLAVGIYGATQIVFQIPF), 81-101 (IIFGLFIFFIGSLIVVSTNSI), 139-159 (IIGVSFAVSFLISVVSAPIIA), 167-187 (IFWISAVFSIFSILIVFFLIP), 217-237 (FYLGVFLLHFLLTMNFLIIPY), 251-271 (IVYFATIVFSFFFLFLIVFYF), 275-295 (FFLKNIIEICIFFIFLSLLLF), 303-323 (ICLTFALQIFFIAFNILEIFF), 346-366 (TSQFLGIACGGVLNGLLCTFF), and 369-389 (NHIFLFEIFITLIWFIFSFFC).

It belongs to the major facilitator superfamily.

The protein localises to the cell membrane. This is an uncharacterized protein from Buchnera aphidicola subsp. Schizaphis graminum (strain Sg).